We begin with the raw amino-acid sequence, 88 residues long: Antitoxin VapB3 (88 aa).

In terms of biological role, antitoxin component of a type II toxin-antitoxin (TA) system. The chain is Antitoxin VapB3 (vapB3) from Mycobacterium tuberculosis (strain CDC 1551 / Oshkosh).